Reading from the N-terminus, the 119-residue chain is uncharacterized protein (119 aa).

Positions 63–104 (KKIKKELESNSEKRKAALQMIKEEHTAKVDRYKMIIEDLRQQ) form a coiled coil.

This is an uncharacterized protein from Bacillus subtilis (strain 168).